A 677-amino-acid polypeptide reads, in one-letter code: WD repeat-containing protein 43 (677 aa).

6 WD repeats span residues 11–51 (PLAP…LHQE), 57–119 (HLSG…LHSK), 124–163 (GHDNRVNCIQWHQDSGCLYSCSDDKHIVEWNVQTCKVKCK), 166–205 (GDNSSVSSLCISPDGKMLLSAGRTIKLWVLETKEVYRHFT), 207–259 (HATP…KEKS), and 267–309 (TDEP…YCKK). A Phosphoserine modification is found at serine 77. A Glycyl lysine isopeptide (Lys-Gly) (interchain with G-Cter in SUMO1); alternate cross-link involves residue lysine 309. A Glycyl lysine isopeptide (Lys-Gly) (interchain with G-Cter in SUMO2); alternate cross-link involves residue lysine 309. Threonine 321 carries the phosphothreonine modification. Lysine 384 participates in a covalent cross-link: Glycyl lysine isopeptide (Lys-Gly) (interchain with G-Cter in SUMO1); alternate. Residue lysine 384 forms a Glycyl lysine isopeptide (Lys-Gly) (interchain with G-Cter in SUMO2); alternate linkage. Threonine 394 bears the Phosphothreonine mark. 4 positions are modified to phosphoserine: serine 399, serine 431, serine 437, and serine 590. Disordered stretches follow at residues 414–445 (AIKPAPPQTEQVESKRKSGGNEVSIEERLGAM) and 582–677 (SEKT…SEEE). A compositionally biased stretch (polar residues) spans 582–592 (SEKTKGATSPG). A compositionally biased stretch (acidic residues) spans 600 to 652 (EEESSEEESDDEIADKDSEDNWDEDEEESESEKDEDVEEEDEDAEGKDEENGE). Residues 653 to 663 (DRDTASEKELN) show a composition bias toward basic and acidic residues. Position 656 is a phosphothreonine (threonine 656). Serine 658 carries the post-translational modification Phosphoserine. Positions 664–677 (GDSDLDPENESEEE) are enriched in acidic residues.

It belongs to the UTP5 family. Part of the small subunit (SSU) processome, composed of more than 70 proteins and the RNA chaperone small nucleolar RNA (snoRNA) U3. May be a component of the proposed t-UTP subcomplex of the ribosomal small subunit (SSU) processome containing at least UTP4, WDR43, HEATR1, UTP15, WDR75. Binds to RNA; binding is required for its chromatin association. Interacts with CDK9, DDX21 and SUPT6H. Interacts with RNA polymerase II. Interacts directly with UTP4 and UTP15.

The protein resides in the nucleus. It localises to the nucleolus. The protein localises to the nucleolus fibrillar center. It is found in the nucleoplasm. Its function is as follows. Ribosome biogenesis factor that coordinates hyperactive transcription and ribogenesis. Part of the small subunit (SSU) processome, first precursor of the small eukaryotic ribosomal subunit. During the assembly of the SSU processome in the nucleolus, many ribosome biogenesis factors, an RNA chaperone and ribosomal proteins associate with the nascent pre-rRNA and work in concert to generate RNA folding, modifications, rearrangements and cleavage as well as targeted degradation of pre-ribosomal RNA by the RNA exosome. Involved in nucleolar processing of pre-18S ribosomal RNA. Required for optimal pre-ribosomal RNA transcription by RNA polymerase I. Essential for stem cell pluripotency and embryonic development. In the nucleoplasm, recruited by promoter-associated/nascent transcripts and transcription to active promoters where it facilitates releases of elongation factor P-TEFb and paused RNA polymerase II to allow transcription elongation and maintain high-level expression of its targets genes. In Homo sapiens (Human), this protein is WD repeat-containing protein 43.